Consider the following 195-residue polypeptide: 3-isopropylmalate dehydratase small subunit (195 aa).

The protein belongs to the LeuD family. LeuD type 1 subfamily. Heterodimer of LeuC and LeuD.

The catalysed reaction is (2R,3S)-3-isopropylmalate = (2S)-2-isopropylmalate. It participates in amino-acid biosynthesis; L-leucine biosynthesis; L-leucine from 3-methyl-2-oxobutanoate: step 2/4. Functionally, catalyzes the isomerization between 2-isopropylmalate and 3-isopropylmalate, via the formation of 2-isopropylmaleate. This is 3-isopropylmalate dehydratase small subunit from Koribacter versatilis (strain Ellin345).